Here is a 300-residue protein sequence, read N- to C-terminus: Nucleotide-binding protein MCCL_0516 (300 aa).

15–22 (GMSGAGKS) provides a ligand contact to ATP. Residue 66–69 (DLRG) participates in GTP binding.

This sequence belongs to the RapZ-like family.

Displays ATPase and GTPase activities. In Macrococcus caseolyticus (strain JCSC5402) (Macrococcoides caseolyticum), this protein is Nucleotide-binding protein MCCL_0516.